Reading from the N-terminus, the 1088-residue chain is Sterol regulatory element-binding protein 2 (1088 aa).

Residues 1–38 (METLTELGDELTLGDIDEMLQFVSNQVGEFPDLFEEQL) are transcriptional activation (acidic). The Cytoplasmic portion of the chain corresponds to 1–440 (METLTELGDE…TGLGMMDRSR (440 aa)). Over residues 59–70 (AAQQPYTTSAPQ) the composition is skewed to polar residues. Positions 59–87 (AAQQPYTTSAPQPQLLPVKAPPQATPQRT) are disordered. The bHLH domain maps to 290–340 (ERRTTHNIIEKRYRSSINDKIMELKDLVMGTDAKMHKSGVLKKAIDYIKYL). Positions 340–361 (LQQVNQKLRQENMALKLANQKN) are leucine-zipper. A disordered region spans residues 392-431 (SPPASDSGSPAVFSPYSVDSEPGSPLLDDEKVKDEPDSPT). Residues 441–461 (MLLCTMTFLCLSFNPLTSLLH) form a helical membrane-spanning segment. Residues 462 to 494 (PESGQYSERAVQHGTGRTMLGVEMSGFYGSWFD) lie on the Lumenal side of the membrane. A helical membrane pass occupies residues 495 to 515 (WLIPTIILWLVNGVIVLSVFM). Over 516–1088 (KLLIHGEPVT…LSGGTAMAAS (573 aa)) the chain is Cytoplasmic.

The protein belongs to the SREBP family. In terms of assembly, forms a tight complex with scap, the SCAP-SREBP complex, in the endoplasmic reticulum membrane. As to quaternary structure, homodimer; efficient DNA binding of the soluble transcription factor fragment requires dimerization with another bHLH protein. Processed in the Golgi apparatus, releasing the protein from the membrane. At low cholesterol the SCAP-SREBP complex is recruited into COPII vesicles for export from the endoplasmic reticulum. In the Golgi, complex SREBPs are cleaved sequentially by site-1 (MBTPS1, S1P) and site-2 (MBTPS2, S2P) proteases. The first cleavage by site-1 protease occurs within the luminal loop, the second cleavage by site-2 protease occurs within the first transmembrane domain, releasing the transcription factor from the Golgi membrane.

Its subcellular location is the endoplasmic reticulum membrane. It localises to the golgi apparatus membrane. It is found in the cytoplasmic vesicle. The protein resides in the COPII-coated vesicle membrane. The protein localises to the nucleus. Functionally, precursor of the transcription factor form (Processed sterol regulatory element-binding protein 2), which is embedded in the endoplasmic reticulum membrane. Low sterol concentrations promote processing of this form, releasing the transcription factor form that translocates into the nucleus and activates transcription of genes involved in cholesterol biosynthesis. Key transcription factor that regulates expression of genes involved in cholesterol biosynthesis. Binds to the sterol regulatory element 1 (SRE-1) (5'-ATCACCCCAC-3'). Has dual sequence specificity binding to both an E-box motif (5'-ATCACGTGA-3') and to SRE-1 (5'-ATCACCCCAC-3'). Regulates transcription of genes related to cholesterol synthesis pathway. The chain is Sterol regulatory element-binding protein 2 from Xenopus laevis (African clawed frog).